Here is a 235-residue protein sequence, read N- to C-terminus: Phosphoribosylaminoimidazole-succinocarboxamide synthase (235 aa).

The protein belongs to the SAICAR synthetase family.

The enzyme catalyses 5-amino-1-(5-phospho-D-ribosyl)imidazole-4-carboxylate + L-aspartate + ATP = (2S)-2-[5-amino-1-(5-phospho-beta-D-ribosyl)imidazole-4-carboxamido]succinate + ADP + phosphate + 2 H(+). The protein operates within purine metabolism; IMP biosynthesis via de novo pathway; 5-amino-1-(5-phospho-D-ribosyl)imidazole-4-carboxamide from 5-amino-1-(5-phospho-D-ribosyl)imidazole-4-carboxylate: step 1/2. The sequence is that of Phosphoribosylaminoimidazole-succinocarboxamide synthase from Chlorobaculum tepidum (strain ATCC 49652 / DSM 12025 / NBRC 103806 / TLS) (Chlorobium tepidum).